A 308-amino-acid chain; its full sequence is Dual oxidase maturation factor 1 (308 aa).

The Extracellular segment spans residues 1–21; the sequence is MQANIFPFYPQPRTPFKFDTK. A helical transmembrane segment spans residues 22–42; that stretch reads IIEIIIICIVTACTFIIILPG. At 43-49 the chain is on the cytoplasmic side; the sequence is IRGKSRS. Residues 50–70 traverse the membrane as a helical segment; that stretch reads IWLLRILTSLFIGAVILAVNF. Over 71-91 the chain is Extracellular; the sequence is TSDWEMGTITATTVYKSFSHS. A helical transmembrane segment spans residues 92–112; the sequence is MLNASIGLWIGLKGLNITLIG. Over 113–175 the chain is Cytoplasmic; sequence NPEYQLNETI…GLFQQYCIST (63 aa). A helical membrane pass occupies residues 176-198; sequence YYSSGIMWIAFCSWILYNVLFSM. Position 199 (Pro-199) is a topological domain, extracellular. The chain crosses the membrane as a helical span at residues 200-220; the sequence is VILYGIYMMFVTAICMLVSLI. Residues 221–247 are Cytoplasmic-facing; it reads SFASVRKAPVCNIQFGNSILKTHFGVS. Residues 248-268 traverse the membrane as a helical segment; the sequence is YWLSLITGLLCLIISLVLLFL. At 269–308 the chain is on the extracellular side; it reads YKTQPKVLQLIFSYGEEEDLSNKSENEEEHSSVLSLNEIL. The N-linked (GlcNAc...) asparagine glycan is linked to Asn-290.

This sequence belongs to the DUOXA family.

The protein resides in the membrane. Its function is as follows. Possible role in maturation and transport from the endoplasmic reticulum to the plasma membrane of functional dual oxidase. This chain is Dual oxidase maturation factor 1 (duoxa1), found in Xenopus laevis (African clawed frog).